A 378-amino-acid polypeptide reads, in one-letter code: Cobalt-precorrin-5B C(1)-methyltransferase (378 aa).

This sequence belongs to the CbiD family.

It catalyses the reaction Co-precorrin-5B + S-adenosyl-L-methionine = Co-precorrin-6A + S-adenosyl-L-homocysteine. The protein operates within cofactor biosynthesis; adenosylcobalamin biosynthesis; cob(II)yrinate a,c-diamide from sirohydrochlorin (anaerobic route): step 6/10. Its function is as follows. Catalyzes the methylation of C-1 in cobalt-precorrin-5B to form cobalt-precorrin-6A. This chain is Cobalt-precorrin-5B C(1)-methyltransferase, found in Methanococcus aeolicus (strain ATCC BAA-1280 / DSM 17508 / OCM 812 / Nankai-3).